A 363-amino-acid chain; its full sequence is Adenylate cyclase 2 (363 aa).

The Guanylate cyclase domain occupies 157 to 286; the sequence is VFLFIDLAGS…DTVNTTARLE (130 aa). Positions 162 and 206 each coordinate Mg(2+). The interval 341-363 is disordered; that stretch reads GDGATEPAGETVRSPAAEAFTSL.

Belongs to the adenylyl cyclase class-3 family. The cofactor is Mg(2+).

The catalysed reaction is ATP = 3',5'-cyclic AMP + diphosphate. Functionally, plays essential roles in regulation of cellular metabolism by catalyzing the synthesis of a second messenger, cAMP. In Rhizobium meliloti (strain 1021) (Ensifer meliloti), this protein is Adenylate cyclase 2 (cya2).